Reading from the N-terminus, the 137-residue chain is Large ribosomal subunit protein uL16 (137 aa).

The protein belongs to the universal ribosomal protein uL16 family. As to quaternary structure, part of the 50S ribosomal subunit.

In terms of biological role, binds 23S rRNA and is also seen to make contacts with the A and possibly P site tRNAs. This is Large ribosomal subunit protein uL16 from Pseudomonas putida (strain ATCC 47054 / DSM 6125 / CFBP 8728 / NCIMB 11950 / KT2440).